Consider the following 589-residue polypeptide: Probable 9-cis-epoxycarotenoid dioxygenase NCED5, chloroplastic (589 aa).

The transit peptide at 1–45 directs the protein to the chloroplast; the sequence is MACSYILTPNPTKLNLSFAPSDLDAPSPSSSVSFTNTKPRRRKLS. Residues 21–34 are compositionally biased toward low complexity; that stretch reads SDLDAPSPSSSVSF. Residues 21–51 are disordered; the sequence is SDLDAPSPSSSVSFTNTKPRRRKLSANSVSD. Fe cation contacts are provided by His287, His336, His401, and His576.

The protein belongs to the carotenoid oxygenase family. As to quaternary structure, interacts in vitro with VAR3. Fe(2+) serves as cofactor. In terms of tissue distribution, detected only in seeds.

It localises to the plastid. It is found in the chloroplast thylakoid membrane. It catalyses the reaction a 9-cis-epoxycarotenoid + O2 = a 12'-apo-carotenal + 2-cis,4-trans-xanthoxin. The catalysed reaction is 9-cis-violaxanthin + O2 = (3S,5R,6S)-5,6-epoxy-3-hydroxy-5,6-dihydro-12'-apo-beta-caroten-12'-al + 2-cis,4-trans-xanthoxin. It carries out the reaction 9'-cis-neoxanthin + O2 = (3S,5R,6R)-3,5-dihydroxy-6,7-didehydro-5,6-dihydro-12'-apo-beta-caroten-12'-al + 2-cis,4-trans-xanthoxin. Has a 11,12(11',12') 9-cis epoxycarotenoid cleavage activity. Catalyzes the first step of abscisic-acid biosynthesis from carotenoids. The protein is Probable 9-cis-epoxycarotenoid dioxygenase NCED5, chloroplastic (NCED5) of Arabidopsis thaliana (Mouse-ear cress).